Here is a 324-residue protein sequence, read N- to C-terminus: Acetyl-coenzyme A carboxylase carboxyl transferase subunit alpha (324 aa).

In terms of domain architecture, CoA carboxyltransferase C-terminal spans 37 to 291; that stretch reads ILEEKLENLE…DLMIQKTFQQ (255 aa).

This sequence belongs to the AccA family. In terms of assembly, acetyl-CoA carboxylase is a heterohexamer composed of biotin carboxyl carrier protein (AccB), biotin carboxylase (AccC) and two subunits each of ACCase subunit alpha (AccA) and ACCase subunit beta (AccD).

The protein localises to the cytoplasm. The catalysed reaction is N(6)-carboxybiotinyl-L-lysyl-[protein] + acetyl-CoA = N(6)-biotinyl-L-lysyl-[protein] + malonyl-CoA. It participates in lipid metabolism; malonyl-CoA biosynthesis; malonyl-CoA from acetyl-CoA: step 1/1. In terms of biological role, component of the acetyl coenzyme A carboxylase (ACC) complex. First, biotin carboxylase catalyzes the carboxylation of biotin on its carrier protein (BCCP) and then the CO(2) group is transferred by the carboxyltransferase to acetyl-CoA to form malonyl-CoA. This chain is Acetyl-coenzyme A carboxylase carboxyl transferase subunit alpha, found in Bacillus cereus (strain ATCC 14579 / DSM 31 / CCUG 7414 / JCM 2152 / NBRC 15305 / NCIMB 9373 / NCTC 2599 / NRRL B-3711).